A 478-amino-acid polypeptide reads, in one-letter code: Glucose-6-phosphate 1-dehydrogenase (478 aa).

Residues Arg48, 86 to 87 (DF), and Lys142 each bind NADP(+). Substrate contacts are provided by His172, Lys176, Glu210, and Asp229. His234 acts as the Proton acceptor in catalysis. Lys334 and Lys339 together coordinate substrate.

This sequence belongs to the glucose-6-phosphate dehydrogenase family.

It catalyses the reaction D-glucose 6-phosphate + NADP(+) = 6-phospho-D-glucono-1,5-lactone + NADPH + H(+). Its pathway is carbohydrate degradation; pentose phosphate pathway; D-ribulose 5-phosphate from D-glucose 6-phosphate (oxidative stage): step 1/3. In terms of biological role, catalyzes the oxidation of glucose 6-phosphate to 6-phosphogluconolactone. This chain is Glucose-6-phosphate 1-dehydrogenase, found in Borreliella burgdorferi (strain ATCC 35210 / DSM 4680 / CIP 102532 / B31) (Borrelia burgdorferi).